The chain runs to 177 residues: Large ribosomal subunit protein uL6 (177 aa).

This sequence belongs to the universal ribosomal protein uL6 family. Part of the 50S ribosomal subunit.

Its function is as follows. This protein binds to the 23S rRNA, and is important in its secondary structure. It is located near the subunit interface in the base of the L7/L12 stalk, and near the tRNA binding site of the peptidyltransferase center. The polypeptide is Large ribosomal subunit protein uL6 (Aeromonas hydrophila subsp. hydrophila (strain ATCC 7966 / DSM 30187 / BCRC 13018 / CCUG 14551 / JCM 1027 / KCTC 2358 / NCIMB 9240 / NCTC 8049)).